Here is a 633-residue protein sequence, read N- to C-terminus: Probable alkaline/neutral invertase A, chloroplastic (633 aa).

The N-terminal 71 residues, 1-71 (MNAITFLGNS…TNAVPFCTDR (71 aa)), are a transit peptide targeting the chloroplast. Serine 623 carries the phosphoserine modification.

The protein belongs to the glycosyl hydrolase 100 family. In terms of tissue distribution, expressed in flowers.

It localises to the plastid. It is found in the chloroplast. It carries out the reaction Hydrolysis of terminal non-reducing beta-D-fructofuranoside residues in beta-D-fructofuranosides.. Chloroplastic invertase that cleaves sucrose into glucose and fructose and may participate in the carbon flux between the cytosol and plastids in leaves. This chain is Probable alkaline/neutral invertase A, chloroplastic, found in Arabidopsis thaliana (Mouse-ear cress).